Reading from the N-terminus, the 254-residue chain is UPF0173 protein YddR (254 aa).

It belongs to the UPF0173 family.

This is UPF0173 protein YddR (yddR) from Bacillus subtilis (strain 168).